The chain runs to 262 residues: Ribosomal RNA small subunit methyltransferase A (262 aa).

S-adenosyl-L-methionine is bound by residues asparagine 14, leucine 16, glycine 41, glutamate 62, aspartate 87, and asparagine 109.

The protein belongs to the class I-like SAM-binding methyltransferase superfamily. rRNA adenine N(6)-methyltransferase family. RsmA subfamily.

The protein resides in the cytoplasm. The catalysed reaction is adenosine(1518)/adenosine(1519) in 16S rRNA + 4 S-adenosyl-L-methionine = N(6)-dimethyladenosine(1518)/N(6)-dimethyladenosine(1519) in 16S rRNA + 4 S-adenosyl-L-homocysteine + 4 H(+). In terms of biological role, specifically dimethylates two adjacent adenosines (A1518 and A1519) in the loop of a conserved hairpin near the 3'-end of 16S rRNA in the 30S particle. May play a critical role in biogenesis of 30S subunits. In Francisella tularensis subsp. tularensis (strain FSC 198), this protein is Ribosomal RNA small subunit methyltransferase A.